We begin with the raw amino-acid sequence, 360 residues long: Probable protein phosphatase 2C 54 (360 aa).

Positions 1 to 39 (MCVEESEGAERLDFGEPAAAAADAGKSKSKSPDELPSPR) are disordered. The 261-residue stretch at 65 to 325 (RSGDWSDIGG…DNLTAVLVSF (261 aa)) folds into the PPM-type phosphatase domain. Mn(2+)-binding residues include D109, G110, D273, and D316.

It belongs to the PP2C family. Mg(2+) serves as cofactor. Mn(2+) is required as a cofactor.

The enzyme catalyses O-phospho-L-seryl-[protein] + H2O = L-seryl-[protein] + phosphate. It carries out the reaction O-phospho-L-threonyl-[protein] + H2O = L-threonyl-[protein] + phosphate. The protein is Probable protein phosphatase 2C 54 of Oryza sativa subsp. japonica (Rice).